Consider the following 96-residue polypeptide: Small ribosomal subunit protein bS6 (96 aa).

The protein belongs to the bacterial ribosomal protein bS6 family.

Binds together with bS18 to 16S ribosomal RNA. The chain is Small ribosomal subunit protein bS6 from Streptococcus suis (strain 98HAH33).